The primary structure comprises 153 residues: Nucleoside diphosphate kinase (153 aa).

Position 2 is an N-acetylalanine (Ala2). 6 residues coordinate ATP: Lys13, Phe61, Arg89, Thr95, Arg106, and Asn116. His119 (pros-phosphohistidine intermediate) is an active-site residue. At Ser126 the chain carries Phosphoserine.

Belongs to the NDK family. As to quaternary structure, homohexamer. Requires Mg(2+) as cofactor.

It localises to the cytoplasm. The protein resides in the cytoskeleton. It catalyses the reaction a 2'-deoxyribonucleoside 5'-diphosphate + ATP = a 2'-deoxyribonucleoside 5'-triphosphate + ADP. It carries out the reaction a ribonucleoside 5'-diphosphate + ATP = a ribonucleoside 5'-triphosphate + ADP. In terms of biological role, major role in the synthesis of nucleoside triphosphates other than ATP. The ATP gamma phosphate is transferred to the NDP beta phosphate via a ping-pong mechanism, using a phosphorylated active-site intermediate. The chain is Nucleoside diphosphate kinase (awd) from Drosophila melanogaster (Fruit fly).